The sequence spans 332 residues: Ketol-acid reductoisomerase (NADP(+)) (332 aa).

One can recognise a KARI N-terminal Rossmann domain in the interval 2–182 (AKIYHDLEVS…GATRAGVLET (181 aa)). Residues 25 to 28 (YGSQ), arginine 48, serine 53, and 83 to 86 (DTEQ) contribute to the NADP(+) site. Histidine 108 is an active-site residue. Residue glycine 134 coordinates NADP(+). Residues 183-328 (TFKEETETDL…KVIREMMPWL (146 aa)) enclose the KARI C-terminal knotted domain. Aspartate 191, glutamate 195, glutamate 227, and glutamate 231 together coordinate Mg(2+). Serine 252 contributes to the substrate binding site.

The protein belongs to the ketol-acid reductoisomerase family. It depends on Mg(2+) as a cofactor.

It carries out the reaction (2R)-2,3-dihydroxy-3-methylbutanoate + NADP(+) = (2S)-2-acetolactate + NADPH + H(+). The enzyme catalyses (2R,3R)-2,3-dihydroxy-3-methylpentanoate + NADP(+) = (S)-2-ethyl-2-hydroxy-3-oxobutanoate + NADPH + H(+). The protein operates within amino-acid biosynthesis; L-isoleucine biosynthesis; L-isoleucine from 2-oxobutanoate: step 2/4. Its pathway is amino-acid biosynthesis; L-valine biosynthesis; L-valine from pyruvate: step 2/4. Functionally, involved in the biosynthesis of branched-chain amino acids (BCAA). Catalyzes an alkyl-migration followed by a ketol-acid reduction of (S)-2-acetolactate (S2AL) to yield (R)-2,3-dihydroxy-isovalerate. In the isomerase reaction, S2AL is rearranged via a Mg-dependent methyl migration to produce 3-hydroxy-3-methyl-2-ketobutyrate (HMKB). In the reductase reaction, this 2-ketoacid undergoes a metal-dependent reduction by NADPH to yield (R)-2,3-dihydroxy-isovalerate. This is Ketol-acid reductoisomerase (NADP(+)) from Dictyoglomus thermophilum (strain ATCC 35947 / DSM 3960 / H-6-12).